Reading from the N-terminus, the 261-residue chain is Synaptophysin-like protein 1 (261 aa).

Residues 1–33 are Cytoplasmic-facing; the sequence is MASKANMVRQRFSRLSQRMSAFQINLNPLKEPL. Residues 28-239 form the MARVEL domain; the sequence is PLKEPLGFIK…NAWFVYKETS (212 aa). The chain crosses the membrane as a helical span at residues 34-54; the sequence is GFIKILEWFASIFAFATCGGF. Residues 55-117 lie on the Vesicular side of the membrane; it reads KGKTEIQVNC…LIGDYSSSAQ (63 aa). N-linked (GlcNAc...) asparagine glycosylation is found at Asn-72 and Asn-95. The helical transmembrane segment at 118–138 threads the bilayer; that stretch reads FYVTFAVFVFLYCIAALLLYV. Residues 139–151 are Cytoplasmic-facing; the sequence is GYTNLYRDSRKLP. Residues 152–172 traverse the membrane as a helical segment; that stretch reads MIDFIVTLVATFLWLVSSSAW. Topologically, residues 173–214 are vesicular; it reads AKALTDIKVATGHRIVEELEICNPESGVSCYFVSVTSMGSLN. N-linked (GlcNAc...) asparagine glycosylation occurs at Asn-214. Residues 215 to 235 traverse the membrane as a helical segment; it reads VSVIFGFLNMILWGGNAWFVY. The Cytoplasmic segment spans residues 236 to 261; the sequence is KETSLHSPSNTSASHSQGGGPPTSGM. The span at 241–251 shows a compositional bias: polar residues; that stretch reads HSPSNTSASHS. The interval 241–261 is disordered; sequence HSPSNTSASHSQGGGPPTSGM. The span at 252-261 shows a compositional bias: gly residues; sequence QGGGPPTSGM.

It belongs to the synaptophysin/synaptobrevin family. Ubiquitously expressed.

The protein localises to the cytoplasmic vesicle membrane. Its subcellular location is the melanosome. This Mus musculus (Mouse) protein is Synaptophysin-like protein 1 (Sypl1).